The chain runs to 596 residues: Elongation factor 4 (596 aa).

The 182-residue stretch at 2–183 (KNIRNFSIIA…AIITRIPAPN (182 aa)) folds into the tr-type G domain. GTP is bound by residues 14-19 (DHGKST) and 130-133 (NKID).

It belongs to the TRAFAC class translation factor GTPase superfamily. Classic translation factor GTPase family. LepA subfamily.

It localises to the cell inner membrane. The catalysed reaction is GTP + H2O = GDP + phosphate + H(+). In terms of biological role, required for accurate and efficient protein synthesis under certain stress conditions. May act as a fidelity factor of the translation reaction, by catalyzing a one-codon backward translocation of tRNAs on improperly translocated ribosomes. Back-translocation proceeds from a post-translocation (POST) complex to a pre-translocation (PRE) complex, thus giving elongation factor G a second chance to translocate the tRNAs correctly. Binds to ribosomes in a GTP-dependent manner. The protein is Elongation factor 4 of Campylobacter concisus (strain 13826).